We begin with the raw amino-acid sequence, 89 residues long: Small ribosomal subunit protein uS15 (89 aa).

It belongs to the universal ribosomal protein uS15 family. Part of the 30S ribosomal subunit. Forms a bridge to the 50S subunit in the 70S ribosome, contacting the 23S rRNA.

Functionally, one of the primary rRNA binding proteins, it binds directly to 16S rRNA where it helps nucleate assembly of the platform of the 30S subunit by binding and bridging several RNA helices of the 16S rRNA. In terms of biological role, forms an intersubunit bridge (bridge B4) with the 23S rRNA of the 50S subunit in the ribosome. The protein is Small ribosomal subunit protein uS15 of Roseiflexus castenholzii (strain DSM 13941 / HLO8).